Here is a 225-residue protein sequence, read N- to C-terminus: Ribonuclease 3 (225 aa).

Residues 4-127 (IEKLEQSLTY…IIGAIHLEAG (124 aa)) form the RNase III domain. Residue Glu40 participates in Mg(2+) binding. Asp44 is a catalytic residue. 2 residues coordinate Mg(2+): Asp113 and Glu116. Residue Glu116 is part of the active site. A DRBM domain is found at 154-223 (DYKTKLQEIT…AKIALEKLGS (70 aa)).

The protein belongs to the ribonuclease III family. Homodimer. Mg(2+) is required as a cofactor.

The protein localises to the cytoplasm. It catalyses the reaction Endonucleolytic cleavage to 5'-phosphomonoester.. Digests double-stranded RNA. Involved in the processing of primary rRNA transcript to yield the immediate precursors to the large and small rRNAs (23S and 16S). Processes some mRNAs, and tRNAs when they are encoded in the rRNA operon. Processes pre-crRNA and tracrRNA of type II CRISPR loci if present in the organism. This is Ribonuclease 3 from Campylobacter jejuni subsp. doylei (strain ATCC BAA-1458 / RM4099 / 269.97).